Consider the following 554-residue polypeptide: Valerianol synthase TPS1F (554 aa).

Mg(2+) contacts are provided by Asp-307 and Asp-311. Residues 326–330 carry the DDXXD motif motif; that stretch reads VQRWD. The Mg(2+) site is built by Asp-452, Ser-456, and Glu-460.

Belongs to the terpene synthase family. Mg(2+) is required as a cofactor.

It carries out the reaction (2E,6E)-farnesyl diphosphate + H2O = valerianol + diphosphate. It functions in the pathway secondary metabolite biosynthesis; terpenoid biosynthesis. In terms of biological role, terpene synthase that catalyzes the biosynthesis of the terpene valerianol, which is a volatile compound of floral scent. This chain is Valerianol synthase TPS1F, found in Camellia hiemalis (Camellia).